The primary structure comprises 156 residues: Eosinophil cationic protein 2 (156 aa).

The N-terminal stretch at 1 to 25 (MGPKLLESRLCLLLLLGLVLMLASC) is a signal peptide. Residue His38 is the Proton acceptor of the active site. 4 disulfide bridges follow: Cys47–Cys106, Cys61–Cys119, Cys79–Cys134, and Cys86–Cys94. Residue 62-66 (KGLNT) coordinates substrate. N-linked (GlcNAc...) asparagine glycosylation is found at Asn89, Asn96, and Asn107. His151 functions as the Proton donor in the catalytic mechanism.

The protein belongs to the pancreatic ribonuclease family.

The protein resides in the cytoplasmic granule. Its function is as follows. Cytotoxin and helminthotoxin with ribonuclease activity. Selectively chemotactic for dendritic cells. Possesses a wide variety of biological activities. This Mus musculus (Mouse) protein is Eosinophil cationic protein 2 (Ear2).